Consider the following 530-residue polypeptide: Calcium/calmodulin-dependent protein kinase type II alpha chain (530 aa).

Positions 12-272 (DNYDIKEELG…AAEALKHPWI (261 aa)) constitute a Protein kinase domain. Residues 20–28 (LGKGAFSIV) and lysine 43 each bind ATP. The Proton acceptor role is filled by aspartate 136. The residue at position 287 (threonine 287) is a Phosphothreonine; by autocatalysis. Positions 291-301 (LKKFNARRKLK) are calmodulin-binding. A phosphothreonine; by autocatalysis mark is found at threonine 306 and threonine 307. Residues 320 to 358 (ITKKGEGSQVKESTDSSSTTLEDDDIKEDKKGTVDRSTT) are disordered. Serine 327 carries the post-translational modification Phosphoserine.

Belongs to the protein kinase superfamily. CAMK Ser/Thr protein kinase family. CaMK subfamily. As to quaternary structure, interacts with CASK. Post-translationally, autophosphorylation at Thr-287 is independent of autophosphorylation at Thr-306 and Thr-307. Expressed at a high level in the central nervous system during the late embryonic stage. In adults, expression is more abundant in the head than in the body.

The enzyme catalyses L-seryl-[protein] + ATP = O-phospho-L-seryl-[protein] + ADP + H(+). It carries out the reaction L-threonyl-[protein] + ATP = O-phospho-L-threonyl-[protein] + ADP + H(+). With respect to regulation, CASK plays a role in regulation of CaMKII autophosphorylation. When complexed with CASK and in the presence Ca[2+]/CaM, autophosphorylation of Thr-287 causes constitutive activation of the kinase. In the absence of Ca[2+]/CaM, autophosphorylation of Thr-306 causes inactivation of the kinase. A key regulator of plasticity in synaptic physiology and behavior, alterations in its activity produce pleiotrophic effects that involve synaptic transmission and development as well as various aspects of behavior. Directly modulates eag potassium channels. This chain is Calcium/calmodulin-dependent protein kinase type II alpha chain (CaMKII), found in Drosophila melanogaster (Fruit fly).